The primary structure comprises 155 residues: Small ribosomal subunit protein bS16 (155 aa).

The interval 100–155 (EAGIPDPAPSTEEPAAVCEASAEMAGQPGEVEPAGAAAEPNSQEPEPEEEKPQVEA) is disordered. Residues 124–143 (AGQPGEVEPAGAAAEPNSQE) show a composition bias toward low complexity.

Belongs to the bacterial ribosomal protein bS16 family.

In Synechococcus sp. (strain JA-3-3Ab) (Cyanobacteria bacterium Yellowstone A-Prime), this protein is Small ribosomal subunit protein bS16.